The sequence spans 444 residues: Protein giant-lens (444 aa).

The N-terminal stretch at 1–24 is a signal peptide; it reads MPTTLMLLPCMLLLLLTAAAVAVG. Two-fingered domain 1 part repeat units follow at residues 123–165 and 285–307; these read RDVR…CRCP and CPSS…YKMC. 8 cysteine pairs are disulfide-bonded: Cys-141–Cys-162, Cys-147–Cys-285, Cys-164–Cys-307, Cys-316–Cys-341, Cys-343–Cys-370, Cys-378–Cys-405, Cys-384–Cys-413, and Cys-407–Cys-440. Two-fingered domain repeat units lie at residues 316–370 and 378–444; these read CTHF…LFAC and CQRK…MAND. Asn-333 carries an N-linked (GlcNAc...) asparagine glycan.

In terms of assembly, interacts with spi. In terms of tissue distribution, during embryogenesis, expression is in a segmental pattern in the ectoderm and in the nervous system. In the eye imaginal disks, expression in photoreceptor cells begins a few rows posterior to the morphogenetic furrow. Also expressed in the wing disk. In the adult, expression is seen in the retina and lamina.

The protein resides in the secreted. Functionally, regulates cell determination; development of ommatidia and optic lobe. Is a signaling molecule involved in the process of axon pathfinding in the eye. Part of the Ras pathway regulating programmed cell death in pupal eyes; activated by lozenge (lz). Antagonist for the Egfr receptor (gurken). Inhibits Egfr signaling without interacting directly with the receptor, but instead by sequestering the Egfr-activating ligand spitz (spi). The chain is Protein giant-lens (aos) from Drosophila melanogaster (Fruit fly).